Here is a 106-residue protein sequence, read N- to C-terminus: Large ribosomal subunit protein eL30 (106 aa).

Belongs to the eukaryotic ribosomal protein eL30 family.

The protein is Large ribosomal subunit protein eL30 of Methanococcus maripaludis (strain C5 / ATCC BAA-1333).